Reading from the N-terminus, the 75-residue chain is Putative UPF0377 protein YJL222W-A (75 aa).

Belongs to the UPF0377 family.

This is Putative UPF0377 protein YJL222W-A from Saccharomyces cerevisiae (strain ATCC 204508 / S288c) (Baker's yeast).